We begin with the raw amino-acid sequence, 204 residues long: MECVFGLVGNGFAIVAADTSAVHSILLHKNNEDKIMVLDSHKLVAASGEPGDRVQFTEYVQKNVSLYKFRNGIPLTTAAAANFTRGELATALRKNPYSVNILMAGYDDESGASLYYIDYIATLHKVDKGAFGYGSYFSLSTMDRHYRSDMSVEEAIELVDKCILEIRSRLVVAPPNFVIKIVDKDGARDYAWRQSVKDVTTAVV.

Met1 carries the post-translational modification N-acetylmethionine.

It belongs to the peptidase T1B family. As to quaternary structure, component of the 20S core complex of the 26S proteasome. The 26S proteasome is composed of a core protease (CP), known as the 20S proteasome, capped at one or both ends by the 19S regulatory particle (RP/PA700). The 20S proteasome core is composed of 28 subunits that are arranged in four stacked rings, resulting in a barrel-shaped structure. The two end rings are each formed by seven alpha subunits, and the two central rings are each formed by seven beta subunits. The catalytic chamber with the active sites is on the inside of the barrel.

The protein localises to the cytoplasm. It is found in the nucleus. Non-catalytic component of the proteasome, a multicatalytic proteinase complex which is characterized by its ability to cleave peptides with Arg, Phe, Tyr, Leu, and Glu adjacent to the leaving group at neutral or slightly basic pH. The proteasome has an ATP-dependent proteolytic activity. The sequence is that of Proteasome subunit beta type-2-A (PBD1) from Arabidopsis thaliana (Mouse-ear cress).